A 128-amino-acid polypeptide reads, in one-letter code: Putative transmembrane protein 244 (128 aa).

The next 3 helical transmembrane spans lie at 17–37, 65–85, and 93–113; these read FLLC…MGCV, VLLV…VPVV, and AISV…EFPL.

The protein localises to the membrane. The sequence is that of Putative transmembrane protein 244 (TMEM244) from Homo sapiens (Human).